We begin with the raw amino-acid sequence, 613 residues long: Metacaspase-1 (613 aa).

Active-site residues include His-404 and Cys-460.

Belongs to the peptidase C14B family. In terms of assembly, monomer.

With respect to regulation, activated by Ca(2+). In terms of biological role, cysteine protease that cleaves specifically after arginine or lysine residues. May play a role in apoptosis. This chain is Metacaspase-1, found in Plasmodium falciparum (isolate 3D7).